The primary structure comprises 411 residues: Probable glutamate dehydrogenase 3 (411 aa).

Residue K102 is part of the active site.

The protein belongs to the Glu/Leu/Phe/Val dehydrogenases family.

The catalysed reaction is L-glutamate + NAD(+) + H2O = 2-oxoglutarate + NH4(+) + NADH + H(+). It carries out the reaction L-glutamate + NADP(+) + H2O = 2-oxoglutarate + NH4(+) + NADPH + H(+). The chain is Probable glutamate dehydrogenase 3 (GSH3) from Arabidopsis thaliana (Mouse-ear cress).